A 180-amino-acid chain; its full sequence is ATP synthase subunit delta, chloroplastic (180 aa).

This sequence belongs to the ATPase delta chain family. F-type ATPases have 2 components, F(1) - the catalytic core - and F(0) - the membrane proton channel. F(1) has five subunits: alpha(3), beta(3), gamma(1), delta(1), epsilon(1). CF(0) has four main subunits: a(1), b(1), b'(1) and c(10-14). The alpha and beta chains form an alternating ring which encloses part of the gamma chain. F(1) is attached to F(0) by a central stalk formed by the gamma and epsilon chains, while a peripheral stalk is formed by the delta, b and b' chains.

It is found in the plastid. The protein localises to the chloroplast thylakoid membrane. Functionally, f(1)F(0) ATP synthase produces ATP from ADP in the presence of a proton or sodium gradient. F-type ATPases consist of two structural domains, F(1) containing the extramembraneous catalytic core and F(0) containing the membrane proton channel, linked together by a central stalk and a peripheral stalk. During catalysis, ATP synthesis in the catalytic domain of F(1) is coupled via a rotary mechanism of the central stalk subunits to proton translocation. In terms of biological role, this protein is part of the stalk that links CF(0) to CF(1). It either transmits conformational changes from CF(0) to CF(1) or is implicated in proton conduction. The chain is ATP synthase subunit delta, chloroplastic from Rhodomonas salina (Cryptomonas salina).